Consider the following 561-residue polypeptide: Excitatory amino acid transporter 4 (561 aa).

Residues 1–52 are Cytoplasmic-facing; the sequence is MSSHGNSLFLRESGAGGGCLQGLQDSLQQRALRTRLRLQTMTREHVRRFLRR. Position 2 is a phosphoserine (Ser-2). The next 3 helical transmembrane spans lie at 53–73, 96–116, and 130–150; these read NAFI…AFAL, MLQM…MASL, and VYYM…VTII. N-linked (GlcNAc...) asparagine glycans are attached at residues Asn-213, Asn-229, and Asn-236. The next 3 helical transmembrane spans lie at 259–282, 292–319, and 341–362; these read SANG…IGGM, FFDS…LFLI, and LTVI…YFLV. Positions 368-398 form an intramembrane region, discontinuously helical; that stretch reads FPFIGGILQALITAMGTSSSSATLPITFRCL. 385–387 is an L-aspartate binding site; that stretch reads SSS. The chain crosses the membrane as a helical span at residues 408–434; the sequence is ITRFVLPVGATVNMDGTALYEALAAIF. Gly-416, Thr-418, and Asn-420 together coordinate Na(+). L-aspartate is bound by residues Thr-424, 465-469, Asp-498, and Asn-505; that span reads IPQAG. Residues 448 to 481 constitute an intramembrane region (discontinuously helical); the sequence is ITTISITATAASVGAAGIPQAGLVTMVIVLTSVG. A helical membrane pass occupies residues 495 to 516; sequence WFLDRLRTMTNVLGDSIGAAVI. Asn-505 and Asp-509 together coordinate Na(+).

This sequence belongs to the dicarboxylate/amino acid:cation symporter (DAACS) (TC 2.A.23) family. SLC1A6 subfamily. As to quaternary structure, homotrimer.

The protein resides in the cell membrane. It carries out the reaction K(+)(in) + L-glutamate(out) + 3 Na(+)(out) + H(+)(out) = K(+)(out) + L-glutamate(in) + 3 Na(+)(in) + H(+)(in). The catalysed reaction is K(+)(in) + L-aspartate(out) + 3 Na(+)(out) + H(+)(out) = K(+)(out) + L-aspartate(in) + 3 Na(+)(in) + H(+)(in). The enzyme catalyses D-aspartate(out) + K(+)(in) + 3 Na(+)(out) + H(+)(out) = D-aspartate(in) + K(+)(out) + 3 Na(+)(in) + H(+)(in). Functionally, sodium-dependent, high-affinity amino acid transporter that mediates the uptake of L-glutamate and also L-aspartate and D-aspartate. Functions as a symporter that transports one amino acid molecule together with two or three Na(+) ions and one proton, in parallel with the counter-transport of one K(+) ion. Mediates Cl(-) flux that is not coupled to amino acid transport; this avoids the accumulation of negative charges due to aspartate and Na(+) symport. Plays a redundant role in the rapid removal of released glutamate from the synaptic cleft, which is essential for terminating the postsynaptic action of glutamate. This Rattus norvegicus (Rat) protein is Excitatory amino acid transporter 4 (Slc1a6).